The primary structure comprises 449 residues: MARRARRPRGRFYSFRRGRWHHLKRLRRRYKFRHRRRQRYRRRAFRKAFHNPRPGTYSVRLPNPQSTMTIRFQGVIFLTEGLILPKNSTAGGYADHMYGARVAKISVNLKEFLLASMNLTYVSKIGGPIAGELIADGSKSQAADNWPNCWLPLDNNVPSATPSAWWRWALMMMQPTDSCRFFNHPKQMTLQDMGRMFGGWHLFRHIETRFQLLATKNEGSFSPVASLLSQGEYLTRRDDVKYSSDHQNRWQKGGQPMTGGIAYATGKMRPDEQQYPAMPPDPPIITATTAQGTQVRCMNSTQAWWSWDTYMSFATLTALGAQWSFPPGQRSVSRRSFNHHKARGAGDPKGQRWHTLVPLGTETITDSYMSAPASELDTNFFTLYVAQGTNKSQQYKFGTATYALKEPVMKSDAWAVVRVQSVWQLGNRQRPYPWDVNWANSTMYWGTQP.

A DNA-binding region spans residues 1–43 (MARRARRPRGRFYSFRRGRWHHLKRLRRRYKFRHRRRQRYRRR). Residues 6 to 47 (RRPRGRFYSFRRGRWHHLKRLRRRYKFRHRRRQRYRRRAFRK) form a nuclear localization signals region.

This sequence belongs to the gyrovirus capsid protein family. As to quaternary structure, homomultimer (Potential). Interacts with Rep; this interaction relocates Rep into the nucleus.

The protein resides in the host nucleus. It is found in the virion. In terms of biological role, self-assembles to form the virion icosahedral capsid with a T=1 symmetry. This very small capsid (25 nm in diameter) allows the virus to be very stable in the environment and resistant to some disinfectants, including detergents. Essential for the initial attachment to host receptors. After attachment, the virus is endocytosed and traffics to the nucleus. The capsid protein binds and transports the viral genome and Rep across the nuclear envelope. The protein is Capsid protein (VP1) of Gallus gallus (Chicken).